A 193-amino-acid chain; its full sequence is MIGRIAGTLIEKNPPHLLVDCHGVGYEIDVPMSTFYNLPATGQPVTLLTQLIVREDAHLLYGFGSAAERNTFRELIKITGIGARMALAVLSGMSVSELAQAITLQEAGRLTRVPGIGKKTAERLMLELKGKLGAELGHAPGAAPVHDSAVDILNALLALGYSEKEAATAIKQVPAGTGVSDGIKLALKALSKA.

The tract at residues 1–64 is domain I; it reads MIGRIAGTLI…EDAHLLYGFG (64 aa). Residues 65–143 form a domain II region; it reads SAAERNTFRE…AELGHAPGAA (79 aa). The segment at 144–151 is flexible linker; sequence PVHDSAVD. A domain III region spans residues 151–193; that stretch reads DILNALLALGYSEKEAATAIKQVPAGTGVSDGIKLALKALSKA.

This sequence belongs to the RuvA family. Homotetramer. Forms an RuvA(8)-RuvB(12)-Holliday junction (HJ) complex. HJ DNA is sandwiched between 2 RuvA tetramers; dsDNA enters through RuvA and exits via RuvB. An RuvB hexamer assembles on each DNA strand where it exits the tetramer. Each RuvB hexamer is contacted by two RuvA subunits (via domain III) on 2 adjacent RuvB subunits; this complex drives branch migration. In the full resolvosome a probable DNA-RuvA(4)-RuvB(12)-RuvC(2) complex forms which resolves the HJ.

Its subcellular location is the cytoplasm. Its function is as follows. The RuvA-RuvB-RuvC complex processes Holliday junction (HJ) DNA during genetic recombination and DNA repair, while the RuvA-RuvB complex plays an important role in the rescue of blocked DNA replication forks via replication fork reversal (RFR). RuvA specifically binds to HJ cruciform DNA, conferring on it an open structure. The RuvB hexamer acts as an ATP-dependent pump, pulling dsDNA into and through the RuvAB complex. HJ branch migration allows RuvC to scan DNA until it finds its consensus sequence, where it cleaves and resolves the cruciform DNA. This is Holliday junction branch migration complex subunit RuvA from Cupriavidus pinatubonensis (strain JMP 134 / LMG 1197) (Cupriavidus necator (strain JMP 134)).